The chain runs to 241 residues: MATIASEYSSEASNTPIEHQFNPYGDNGGTILGIAGEDFAVLAGDTRNITDYSINSRYEPKVFDCGDNIVMSANGFAADGDALVKRFKNSVKWYHFDHNDKKLSINSAARNIQHLLYGKRFFPYYVHTIIAGLDEDGKGAVYSFDPVGSYEREQCRAGGAAASLIMPFLDNQVNFKNQYEPGTNGKVKKPLKYLSVEEVIKLVRDSFTSATERHIQVGDGLEILIVTKDGVRKEFYELKRD.

A propeptide spanning residues 1 to 19 (MATIASEYSSEASNTPIEH) is cleaved from the precursor.

Belongs to the peptidase T1B family. In terms of assembly, the 26S proteasome consists of a 20S proteasome core and two 19S regulatory subunits. The 20S proteasome core is composed of 28 subunits that are arranged in four stacked rings, resulting in a barrel-shaped structure. The two end rings are each formed by seven alpha subunits, and the two central rings are each formed by seven beta subunits. The catalytic chamber with the active sites is on the inside of the barrel.

It is found in the cytoplasm. Its subcellular location is the nucleus. Non-catalytic component of the proteasome which degrades poly-ubiquitinated proteins in the cytoplasm and in the nucleus. It is essential for the regulated turnover of proteins and for the removal of misfolded proteins. The proteasome is a multicatalytic proteinase complex that is characterized by its ability to cleave peptides with Arg, Phe, Tyr, Leu, and Glu adjacent to the leaving group at neutral or slightly basic pH. It has an ATP-dependent proteolytic activity. The polypeptide is Proteasome subunit beta type-6 (PRE7) (Saccharomyces cerevisiae (strain ATCC 204508 / S288c) (Baker's yeast)).